Consider the following 1374-residue polypeptide: DNA-directed RNA polymerase subunit beta (1374 aa).

It belongs to the RNA polymerase beta chain family. As to quaternary structure, the RNAP catalytic core consists of 2 alpha, 1 beta, 1 beta' and 1 omega subunit. When a sigma factor is associated with the core the holoenzyme is formed, which can initiate transcription.

It carries out the reaction RNA(n) + a ribonucleoside 5'-triphosphate = RNA(n+1) + diphosphate. Functionally, DNA-dependent RNA polymerase catalyzes the transcription of DNA into RNA using the four ribonucleoside triphosphates as substrates. The protein is DNA-directed RNA polymerase subunit beta of Rhodopseudomonas palustris (strain TIE-1).